The primary structure comprises 227 residues: MHIERLDFENSPYLGVFGVATDRVVLVREGLQEKKLEVIREVLKVPVIEASIMKSRIIGTLATGNSNAILVPWYVWDTEIERIKSAFKEYGIETEIVPFRTKYTALGNLILTNDKAALVSAKFSRDEAKEIGDILGVEVERGLIAGLHAVGSAGVVTNKGGLVHPEASDEELEWLSELFKVDVYVGTANMGVPYVGTCMLANSNGVVVGHLTTGPEIVKIEEALGLI.

It belongs to the eIF-6 family.

Its function is as follows. Binds to the 50S ribosomal subunit and prevents its association with the 30S ribosomal subunit to form the 70S initiation complex. The protein is Translation initiation factor 6 of Pyrococcus abyssi (strain GE5 / Orsay).